Here is a 260-residue protein sequence, read N- to C-terminus: Adenosylcobinamide-GDP ribazoletransferase (260 aa).

6 helical membrane-spanning segments follow: residues 40 to 60, 64 to 84, 117 to 137, 142 to 162, 188 to 208, and 210 to 230; these read AFPF…LLLL, TDPL…TGAL, YGAI…AAII, PLAA…AIAW, HFAL…PFGL, and PLVA…VFIR.

This sequence belongs to the CobS family. Requires Mg(2+) as cofactor.

It localises to the cell inner membrane. It carries out the reaction alpha-ribazole + adenosylcob(III)inamide-GDP = adenosylcob(III)alamin + GMP + H(+). The catalysed reaction is alpha-ribazole 5'-phosphate + adenosylcob(III)inamide-GDP = adenosylcob(III)alamin 5'-phosphate + GMP + H(+). Its pathway is cofactor biosynthesis; adenosylcobalamin biosynthesis; adenosylcobalamin from cob(II)yrinate a,c-diamide: step 7/7. Functionally, joins adenosylcobinamide-GDP and alpha-ribazole to generate adenosylcobalamin (Ado-cobalamin). Also synthesizes adenosylcobalamin 5'-phosphate from adenosylcobinamide-GDP and alpha-ribazole 5'-phosphate. The chain is Adenosylcobinamide-GDP ribazoletransferase from Rhizobium etli (strain ATCC 51251 / DSM 11541 / JCM 21823 / NBRC 15573 / CFN 42).